A 110-amino-acid chain; its full sequence is Large ribosomal subunit protein uL22 (110 aa).

The protein belongs to the universal ribosomal protein uL22 family. In terms of assembly, part of the 50S ribosomal subunit.

This protein binds specifically to 23S rRNA; its binding is stimulated by other ribosomal proteins, e.g. L4, L17, and L20. It is important during the early stages of 50S assembly. It makes multiple contacts with different domains of the 23S rRNA in the assembled 50S subunit and ribosome. Its function is as follows. The globular domain of the protein is located near the polypeptide exit tunnel on the outside of the subunit, while an extended beta-hairpin is found that lines the wall of the exit tunnel in the center of the 70S ribosome. This Shewanella halifaxensis (strain HAW-EB4) protein is Large ribosomal subunit protein uL22.